Reading from the N-terminus, the 327-residue chain is Glycerol-3-phosphate dehydrogenase [NAD(P)+] (327 aa).

The NADPH site is built by W11, R30, and K103. 3 residues coordinate sn-glycerol 3-phosphate: K103, G131, and S133. A135 is a binding site for NADPH. Residues K186, D243, S253, R254, and N255 each coordinate sn-glycerol 3-phosphate. The Proton acceptor role is filled by K186. Residue R254 participates in NADPH binding. 2 residues coordinate NADPH: V281 and E283.

It belongs to the NAD-dependent glycerol-3-phosphate dehydrogenase family.

The protein resides in the cytoplasm. The enzyme catalyses sn-glycerol 3-phosphate + NAD(+) = dihydroxyacetone phosphate + NADH + H(+). The catalysed reaction is sn-glycerol 3-phosphate + NADP(+) = dihydroxyacetone phosphate + NADPH + H(+). Its pathway is membrane lipid metabolism; glycerophospholipid metabolism. Functionally, catalyzes the reduction of the glycolytic intermediate dihydroxyacetone phosphate (DHAP) to sn-glycerol 3-phosphate (G3P), the key precursor for phospholipid synthesis. The protein is Glycerol-3-phosphate dehydrogenase [NAD(P)+] of Wolbachia sp. subsp. Drosophila simulans (strain wRi).